The sequence spans 192 residues: Beta-glucosidase (192 aa).

The protein belongs to the glycosyl hydrolase 3 family.

The enzyme catalyses Hydrolysis of terminal, non-reducing beta-D-glucosyl residues with release of beta-D-glucose.. Its pathway is glycan metabolism; cellulose degradation. The polypeptide is Beta-glucosidase (Schizophyllum commune (Split gill fungus)).